Consider the following 206-residue polypeptide: Small ribosomal subunit protein uS4 (206 aa).

Residues 96–156 (TRLDNVVYRM…EKSRTQARIK (61 aa)) form the S4 RNA-binding domain.

The protein belongs to the universal ribosomal protein uS4 family. Part of the 30S ribosomal subunit. Contacts protein S5. The interaction surface between S4 and S5 is involved in control of translational fidelity.

Functionally, one of the primary rRNA binding proteins, it binds directly to 16S rRNA where it nucleates assembly of the body of the 30S subunit. In terms of biological role, with S5 and S12 plays an important role in translational accuracy. The sequence is that of Small ribosomal subunit protein uS4 from Shewanella putrefaciens (strain CN-32 / ATCC BAA-453).